The sequence spans 157 residues: Protein Smg (157 aa).

Belongs to the Smg family.

The protein is Protein Smg of Buchnera aphidicola subsp. Schizaphis graminum (strain Sg).